We begin with the raw amino-acid sequence, 104 residues long: Flagellar hook-basal body complex protein FliE (104 aa).

This sequence belongs to the FliE family.

Its subcellular location is the bacterial flagellum basal body. The polypeptide is Flagellar hook-basal body complex protein FliE (Salmonella heidelberg (strain SL476)).